Consider the following 2048-residue polypeptide: Myoferlin (2048 aa).

Residues 1 to 101 (MLRVIVESAT…IGDQNRSLPY (101 aa)) form the C2 1 domain. Residues 1–2012 (MLRVIVESAT…MRFIVWRRFK (2012 aa)) are Cytoplasmic-facing. Residues 124–176 (YTPPSAPHPNDPSGTSVPGMGEEEEEDQGDEDRVDGIVRGPGPKGPSGTVSEA) form a disordered region. The span at 144–156 (GEEEEEDQGDEDR) shows a compositional bias: acidic residues. A phosphoserine mark is found at Ser-170 and Ser-174. 2 C2 domains span residues 183–300 (TKGK…RKWL) and 339–475 (DSDD…EATT). The segment at 186–281 (KSSRRMLSNK…RADCLMGEFK (96 aa)) is necessary for interaction with EHD2. The Ca(2+) site is built by Asp-390, Asp-396, Asp-444, Asp-446, and Asp-452. Lys-540 and Lys-871 each carry N6-acetyllysine. 2 consecutive C2 domains span residues 1110-1238 (GANT…LLWH) and 1269-1397 (LPSQ…GKED). 4 residues coordinate Ca(2+): Asp-1142, Asp-1148, Asp-1204, and Asp-1206. Position 1494 is an N6-acetyllysine (Lys-1494). C2 domains lie at 1523–1641 (PAPP…SHCG) and 1759–1907 (GPPG…EKCS). Ca(2+) contacts are provided by Asp-1556, Asp-1562, Asp-1611, Asp-1613, Asp-1878, Ser-1881, and Asp-1884. The segment covering 1964–1975 (EADERPAGKGRS) has biased composition (basic and acidic residues). A disordered region spans residues 1964–1986 (EADERPAGKGRSEPNMNPKLDPP). Residues 2013 to 2033 (WVIIGLLLLLILLLFVAVLLY) traverse the membrane as a helical segment. Over 2034 to 2048 (SLPNYLSMKIVRPNA) the chain is Extracellular.

It belongs to the ferlin family. As to quaternary structure, interacts with EHD1. Interacts with EHD2; the interaction is direct. Interacts with DNM2 and KDR. Interacts with RIPOR2. It depends on Ca(2+) as a cofactor. In terms of tissue distribution, expressed in myoblasts (at protein level). Expressed in endothelial cells.

It is found in the cell membrane. Its subcellular location is the nucleus membrane. The protein localises to the cytoplasmic vesicle membrane. Its function is as follows. Calcium/phospholipid-binding protein that plays a role in the plasmalemma repair mechanism of endothelial cells that permits rapid resealing of membranes disrupted by mechanical stress. Involved in endocytic recycling. Implicated in VEGF signal transduction by regulating the levels of the receptor KDR. This is Myoferlin (Myof) from Mus musculus (Mouse).